Here is a 473-residue protein sequence, read N- to C-terminus: B box and SPRY domain-containing protein (473 aa).

Residues 1-69 (MSADVSGTES…PKQGSERSQL (69 aa)) form a disordered region. Over residues 35–51 (KPGPGPEPRPESGPEPG) the composition is skewed to pro residues. The B box-type zinc finger occupies 65-113 (ERSQLCPEHFEPLSWFCLSERRPVCATCAGFGGRCHRHRIRRAEEHAEE). The B30.2/SPRY domain occupies 259-455 (SPLLTQLWAA…ISIVRGPLAT (197 aa)).

As to quaternary structure, interacts with YWHAZ/14-3-3 protein zeta. Interacts with TRPV5 and TRPV6. In terms of tissue distribution, according to PubMed:10978534, testis-specific. According to PubMed:16371431, broadly expressed.

It is found in the cytoplasm. The protein resides in the membrane. Its function is as follows. May regulate epithelial calcium transport by inhibiting TRPV5 activity. This is B box and SPRY domain-containing protein (Bspry) from Mus musculus (Mouse).